Consider the following 110-residue polypeptide: Phosphoribosyl-ATP pyrophosphatase (110 aa).

The protein belongs to the PRA-PH family.

It is found in the cytoplasm. It carries out the reaction 1-(5-phospho-beta-D-ribosyl)-ATP + H2O = 1-(5-phospho-beta-D-ribosyl)-5'-AMP + diphosphate + H(+). Its pathway is amino-acid biosynthesis; L-histidine biosynthesis; L-histidine from 5-phospho-alpha-D-ribose 1-diphosphate: step 2/9. The polypeptide is Phosphoribosyl-ATP pyrophosphatase (Hahella chejuensis (strain KCTC 2396)).